The primary structure comprises 283 residues: Nucleoid occlusion protein (283 aa).

Positions 142 to 161 (ESLAQRLGKGQSTIANKLRL) form a DNA-binding region, H-T-H motif.

It belongs to the ParB family.

It is found in the cytoplasm. The protein localises to the nucleoid. Its function is as follows. Effects nucleoid occlusion by binding relatively nonspecifically to DNA and preventing the assembly of the division machinery in the vicinity of the nucleoid, especially under conditions that disturb the cell cycle. It helps to coordinate cell division and chromosome segregation by preventing the formation of the Z ring through the nucleoid, which would cause chromosome breakage. The polypeptide is Nucleoid occlusion protein (Shouchella clausii (strain KSM-K16) (Alkalihalobacillus clausii)).